We begin with the raw amino-acid sequence, 327 residues long: Probable cell division protein WhiA (327 aa).

Positions 275–308 (SLEELGRLADPQMTKDAVAGRIRRLLTTADKRAR) form a DNA-binding region, H-T-H motif.

This sequence belongs to the WhiA family.

In terms of biological role, involved in cell division and chromosome segregation. The chain is Probable cell division protein WhiA from Corynebacterium efficiens (strain DSM 44549 / YS-314 / AJ 12310 / JCM 11189 / NBRC 100395).